The sequence spans 408 residues: MTVYYKGFPQSDRNEAIKMVNVDELEDRVRKVMPEAAYYYIASGSENEWTWRNNTAAFNHFQIVPRSLTNMDNPSTETQFMGMDLKTPIMICPIACHGIAHKDAEVATAQGAKAAGALFSSSTYANRSVEDIATATGDSPKFFQLYLSKDWDFNKMVFDAVKSAGYKGIMLTVDALVSGYREANLRTNFTFPVPLDFFTRYVGAEGEGMSVAQMYANSAQKIGPADVAKIKEMSGLPVFVKGVMNAEDAYMAIGAGADGIVVSNHGGREIDTAPATIDMLPEIAAAVNGRVPIILDSGVRRGSHVFKALALGADLVGIGRPFLYGLALGGAKGVESVINQINNEFKILMQLTGCKTVEDVKHADIRQINYTADNLPSNTDPSVRRAYPVTKENQMEGTQDAATGASKH.

One can recognise an FMN hydroxy acid dehydrogenase domain in the interval N14–Y370. A pyruvate-binding site is contributed by Y40. Residues P93–A95, S122, and Q144 each bind FMN. Y146 serves as a coordination point for pyruvate. An FMN-binding site is contributed by T172. R181 serves as a coordination point for pyruvate. The FMN site is built by K241 and S263. Pyruvate is bound by residues H265 and R268. H265 acts as the Proton acceptor in catalysis. FMN-binding positions include D296–R300 and R320.

It belongs to the FMN-dependent alpha-hydroxy acid dehydrogenase family. Homotetramer. Requires FMN as cofactor.

It carries out the reaction a (2S)-2-hydroxycarboxylate + O2 = a 2-oxocarboxylate + H2O2. The catalysed reaction is (S)-lactate + O2 = pyruvate + H2O2. The enzyme catalyses 2-hydroxyoctanoate + O2 = 2-oxooctanoate + H2O2. It catalyses the reaction glycolate + O2 = glyoxylate + H2O2. It carries out the reaction mandelate + O2 = phenylglyoxylate + H2O2. The catalysed reaction is 2-hydroxyoctadecanoate + O2 = 2-oxooctadecanoate + H2O2. Its function is as follows. Oxidase that catalyzes the oxidation of a broad range of 2-hydroxyacids in vitro, such as (S)-lactate, 2-hydroxyoctanoate, and to a lesser extent glycolate, mandelate and 2-hydroxyoctadecanoate, to the corresponding 2-oxoacids, with a reduction of O2 to H2O2. May be involved in the utilization of L-lactate as an energy source for growth. In Lactobacillus jensenii, this protein is L-lactate oxidase.